A 392-amino-acid chain; its full sequence is 8-amino-7-oxononanoate synthase (392 aa).

Substrate is bound at residue Arg26. 113–114 (GY) contributes to the pyridoxal 5'-phosphate binding site. His138 is a binding site for substrate. Pyridoxal 5'-phosphate contacts are provided by Ser186, His214, and Thr241. Position 244 is an N6-(pyridoxal phosphate)lysine (Lys244). Thr353 lines the substrate pocket.

The protein belongs to the class-II pyridoxal-phosphate-dependent aminotransferase family. BioF subfamily. As to quaternary structure, homodimer. It depends on pyridoxal 5'-phosphate as a cofactor.

It catalyses the reaction 6-carboxyhexanoyl-[ACP] + L-alanine + H(+) = (8S)-8-amino-7-oxononanoate + holo-[ACP] + CO2. Its pathway is cofactor biosynthesis; biotin biosynthesis. Catalyzes the decarboxylative condensation of pimeloyl-[acyl-carrier protein] and L-alanine to produce 8-amino-7-oxononanoate (AON), [acyl-carrier protein], and carbon dioxide. The polypeptide is 8-amino-7-oxononanoate synthase (Maricaulis maris (strain MCS10) (Caulobacter maris)).